A 464-amino-acid chain; its full sequence is Argininosuccinate lyase (464 aa).

Alanine 2 carries the N-acetylalanine modification. Lysine 7 is modified (N6-acetyllysine). Residue serine 27 participates in 2-(N(omega)-L-arginino)succinate binding. At lysine 69 the chain carries N6-acetyllysine. 2-(N(omega)-L-arginino)succinate is bound by residues asparagine 114 and threonine 159. The active-site Proton acceptor is histidine 160. Catalysis depends on serine 281, which acts as the Proton donor. Lysine 288 bears the N6-acetyllysine mark. Asparagine 289, tyrosine 321, glutamine 326, and lysine 329 together coordinate 2-(N(omega)-L-arginino)succinate.

Belongs to the lyase 1 family. Argininosuccinate lyase subfamily. In terms of assembly, homotetramer. Forms tissue-specific complexes with ASS1, SLC7A1, HSP90AA1 and nitric oxide synthase NOS1, NOS2 or NOS3; the complex maintenance is independent of ASL catalytic function. In terms of processing, acetylation modifies enzyme activity in response to alterations of extracellular nutrient availability. Acetylation increased with trichostin A (TSA) or with nicotinamide (NAM). Glucose increases acetylation by about a factor of 3 with decreasing enzyme activity. Acetylation on Lys-288 is decreased on the addition of extra amino acids resulting in activation of enzyme activity. As to expression, expressed in lung and brain (at protein level).

It catalyses the reaction 2-(N(omega)-L-arginino)succinate = fumarate + L-arginine. It functions in the pathway amino-acid biosynthesis; L-arginine biosynthesis; L-arginine from L-ornithine and carbamoyl phosphate: step 3/3. The protein operates within nitrogen metabolism; urea cycle; L-arginine and fumarate from (N(omega)-L-arginino)succinate: step 1/1. Its activity is regulated as follows. Enzyme activity is regulated by acetylation. Functionally, catalyzes the reversible cleavage of L-argininosuccinate to fumarate and L-arginine, an intermediate step reaction in the urea cycle mostly providing for hepatic nitrogen detoxification into excretable urea as well as de novo L-arginine synthesis in nonhepatic tissues. Essential regulator of intracellular and extracellular L-arginine pools. As part of citrulline-nitric oxide cycle, forms tissue-specific multiprotein complexes with argininosuccinate synthase ASS1, transport protein SLC7A1 and nitric oxide synthase NOS1, NOS2 or NOS3, allowing for cell-autonomous L-arginine synthesis while channeling extracellular L-arginine to nitric oxide synthesis pathway. This Mus musculus (Mouse) protein is Argininosuccinate lyase (Asl).